The primary structure comprises 566 residues: NAD-dependent malic enzyme (566 aa).

The active-site Proton donor is tyrosine 104. Arginine 157 is a binding site for NAD(+). Residue lysine 175 is the Proton acceptor of the active site. Residues glutamate 246, aspartate 247, and aspartate 270 each coordinate a divalent metal cation. Aspartate 270 and asparagine 419 together coordinate NAD(+).

Belongs to the malic enzymes family. Homotetramer. Mg(2+) is required as a cofactor. The cofactor is Mn(2+).

The catalysed reaction is (S)-malate + NAD(+) = pyruvate + CO2 + NADH. The enzyme catalyses oxaloacetate + H(+) = pyruvate + CO2. In Cronobacter sakazakii (strain ATCC BAA-894) (Enterobacter sakazakii), this protein is NAD-dependent malic enzyme.